A 280-amino-acid chain; its full sequence is 3-methyl-2-oxobutanoate hydroxymethyltransferase (280 aa).

Residues Asp-45 and Asp-84 each coordinate Mg(2+). 3-methyl-2-oxobutanoate contacts are provided by residues 45 to 46 (DS), Asp-84, and Lys-114. Glu-116 is a Mg(2+) binding site. Glu-183 functions as the Proton acceptor in the catalytic mechanism.

Belongs to the PanB family. As to quaternary structure, homodecamer; pentamer of dimers. Mg(2+) serves as cofactor.

The protein localises to the cytoplasm. The catalysed reaction is 3-methyl-2-oxobutanoate + (6R)-5,10-methylene-5,6,7,8-tetrahydrofolate + H2O = 2-dehydropantoate + (6S)-5,6,7,8-tetrahydrofolate. It functions in the pathway cofactor biosynthesis; (R)-pantothenate biosynthesis; (R)-pantoate from 3-methyl-2-oxobutanoate: step 1/2. Functionally, catalyzes the reversible reaction in which hydroxymethyl group from 5,10-methylenetetrahydrofolate is transferred onto alpha-ketoisovalerate to form ketopantoate. This is 3-methyl-2-oxobutanoate hydroxymethyltransferase from Clostridium kluyveri (strain ATCC 8527 / DSM 555 / NBRC 12016 / NCIMB 10680 / K1).